The sequence spans 228 residues: Probable septum site-determining protein MinC (228 aa).

The protein belongs to the MinC family. In terms of assembly, interacts with MinD and FtsZ.

In terms of biological role, cell division inhibitor that blocks the formation of polar Z ring septums. Rapidly oscillates between the poles of the cell to destabilize FtsZ filaments that have formed before they mature into polar Z rings. Prevents FtsZ polymerization. The polypeptide is Probable septum site-determining protein MinC (Yersinia enterocolitica serotype O:8 / biotype 1B (strain NCTC 13174 / 8081)).